A 408-amino-acid polypeptide reads, in one-letter code: Succinylornithine transaminase (408 aa).

The residue at position 252 (Lys-252) is an N6-(pyridoxal phosphate)lysine.

Belongs to the class-III pyridoxal-phosphate-dependent aminotransferase family. AstC subfamily. Pyridoxal 5'-phosphate is required as a cofactor.

It carries out the reaction N(2)-succinyl-L-ornithine + 2-oxoglutarate = N-succinyl-L-glutamate 5-semialdehyde + L-glutamate. It participates in amino-acid degradation; L-arginine degradation via AST pathway; L-glutamate and succinate from L-arginine: step 3/5. Functionally, catalyzes the transamination of N(2)-succinylornithine and alpha-ketoglutarate into N(2)-succinylglutamate semialdehyde and glutamate. Can also act as an acetylornithine aminotransferase. This chain is Succinylornithine transaminase, found in Salmonella enteritidis PT4 (strain P125109).